The following is a 655-amino-acid chain: Kelch-like protein 13 (655 aa).

The region spanning Cys92 to Met161 is the BTB domain. The BACK domain occupies Cys196–Gln297. 6 Kelch repeats span residues His341–Asn389, Phe390–Gly441, Tyr442–Gly488, Met490–Glu535, Leu537–Asn587, and Lys588–Val636.

As to quaternary structure, component of the BCR(KLHL9-KLHL13) E3 ubiquitin ligase complex, at least composed of CUL3, KLHL9, KLHL13 and RBX1. Interacts with AURKB.

It participates in protein modification; protein ubiquitination. Its function is as follows. Substrate-specific adapter of a BCR (BTB-CUL3-RBX1) E3 ubiquitin-protein ligase complex required for mitotic progression and cytokinesis. The BCR(KLHL9-KLHL13) E3 ubiquitin ligase complex mediates the ubiquitination of AURKB and controls the dynamic behavior of AURKB on mitotic chromosomes and thereby coordinates faithful mitotic progression and completion of cytokinesis. This chain is Kelch-like protein 13 (KLHL13), found in Homo sapiens (Human).